We begin with the raw amino-acid sequence, 2054 residues long: Multiple PDZ domain protein (2054 aa).

In terms of domain architecture, L27 spans 3–63; it reads ETIDKNRALQ…SLQQLKDQVN (61 aa). A PDZ 1 domain is found at 138-225; the sequence is IFELLKPPCG…TIQLVIARGS (88 aa). Ser-231 bears the Phosphoserine mark. PDZ domains lie at 258–338, 377–463, 545–626, and 692–778; these read TIEL…ARGA, DVEL…MRKG, VAHV…CRRT, and AIEL…VAKP. Phosphoserine is present on residues Ser-782 and Ser-1065. Residues 995 to 1076 form the PDZ 6 domain; sequence TVTIAKGSSS…IGPDIKITYV (82 aa). A disordered region spans residues 1110 to 1129; the sequence is PELPEREEGEGEESELQNAA. Positions 1138 to 1230 constitute a PDZ 7 domain; that stretch reads RVELWREPSK…PVVFMVQSIV (93 aa). Arg-1157 is subject to Omega-N-methylarginine. A compositionally biased stretch (polar residues) spans 1261–1273; the sequence is LQLTSDKAPSQSE. Residues 1261 to 1312 are disordered; it reads LQLTSDKAPSQSESESEKATLCSVPSSSPSVFSEMSSDYAQPSATTVAEDED. Low complexity predominate over residues 1283–1297; it reads SVPSSSPSVFSEMSS. Residues 1337 to 1420 form the PDZ 8 domain; it reads MIELEKGHSG…KVKIIFIRNA (84 aa). The disordered stretch occupies residues 1433-1454; sequence AADPLPSTSESPQNKEVEPSIT. Residues 1470-1551 form the PDZ 9 domain; sequence HLELPKDQGG…TVKLTVGAEN (82 aa). The disordered stretch occupies residues 1560 to 1594; that stretch reads AAVTASGERKDSSQTPAVPAPDLEPIPSTSRSSTP. PDZ domains follow at residues 1613-1696 and 1709-1791; these read TIEI…YRDE and TVEL…GRIK. The disordered stretch occupies residues 1795-1834; the sequence is FHSERRPSQSSQVSESSLSSFSLPRSGIHTSESSESSAKK. Ser-1802 and Ser-1808 each carry phosphoserine. The segment covering 1802-1834 has biased composition (low complexity); it reads SQSSQVSESSLSSFSLPRSGIHTSESSESSAKK. PDZ domains are found at residues 1846-1932 and 1971-2054; these read TVEI…VAGG and TITL…MVLS.

As to quaternary structure, interacts with F11R/JAM, CLDN1, NG2, CXADR, CRB1, MPP4 and PALS1, HTR2A, HTR2B, PLEKHA1/TAPP1 and PLEKHA2/TAPP2. Interacts with CXADR. Interacts with HTR2C, CLDN5, DLG4, GRIN1, SYNGAP1, CAMK2A and CAMK2B. Interacts with FAT4 (via cytoplasmic domain). Interacts with DLL1. Abundant in all cerebral cortical layers, especially the piriform cortex, the pyramidal cells of the CA1-CA3 subfields of the hippocampus, as well as the granular layer of the dentate gyrus. Detected in the internal granular layer and the mitral cell layer of the olfactory bulb; in the medial habenular nucleus; and in amygdaloid, thalamic, hypothalamic, and pontine nuclei. In the cerebellum, found at high levels in the granular layer. Detected in the lateral ventricle. Expression overlaps with 5-HT2C receptor expression in all regions of the brain including the choroid plexus, where 5-HT2C receptors are highly enriched.

The protein localises to the endomembrane system. It localises to the cell junction. The protein resides in the tight junction. Its subcellular location is the synapse. It is found in the apical cell membrane. The protein localises to the postsynaptic density. It localises to the cell projection. The protein resides in the dendrite. Its subcellular location is the synaptosome. Member of the NMDAR signaling complex that may play a role in control of AMPAR potentiation and synaptic plasticity in excitatory synapses. Promotes clustering of HT2RC at the cell surface. The polypeptide is Multiple PDZ domain protein (Mpdz) (Rattus norvegicus (Rat)).